The sequence spans 38 residues: Photosystem I reaction center subunit IX (38 aa).

Residues 4 to 24 traverse the membrane as a helical segment; sequence FLTAAPVVAAIWFTATAGILI.

It belongs to the PsaJ family.

The protein resides in the cellular thylakoid membrane. In terms of biological role, may help in the organization of the PsaE and PsaF subunits. The chain is Photosystem I reaction center subunit IX from Synechococcus sp. (strain CC9605).